We begin with the raw amino-acid sequence, 126 residues long: Profilin (126 aa).

This sequence belongs to the profilin family. As to quaternary structure, occurs in many kinds of cells as a complex with monomeric actin in a 1:1 ratio.

It is found in the cytoplasm. The protein localises to the cytoskeleton. Binds to actin and affects the structure of the cytoskeleton. At high concentrations, profilin prevents the polymerization of actin, whereas it enhances it at low concentrations. By binding to PIP2, it inhibits the formation of IP3 and DG. The chain is Profilin from Branchiostoma belcheri (Amphioxus).